The chain runs to 355 residues: Phosphoribosylformylglycinamidine cyclo-ligase (355 aa).

This sequence belongs to the AIR synthase family.

It localises to the cytoplasm. It catalyses the reaction 2-formamido-N(1)-(5-O-phospho-beta-D-ribosyl)acetamidine + ATP = 5-amino-1-(5-phospho-beta-D-ribosyl)imidazole + ADP + phosphate + H(+). The protein operates within purine metabolism; IMP biosynthesis via de novo pathway; 5-amino-1-(5-phospho-D-ribosyl)imidazole from N(2)-formyl-N(1)-(5-phospho-D-ribosyl)glycinamide: step 2/2. The sequence is that of Phosphoribosylformylglycinamidine cyclo-ligase from Paraburkholderia phytofirmans (strain DSM 17436 / LMG 22146 / PsJN) (Burkholderia phytofirmans).